We begin with the raw amino-acid sequence, 312 residues long: DNA-directed RNA polymerase subunit alpha (312 aa).

The segment at 1-229 is alpha N-terminal domain (alpha-NTD); that stretch reads MLQYQIDRID…ELFQPLATVT (229 aa). The tract at residues 241–312 is alpha C-terminal domain (alpha-CTD); sequence SPEAQIPLEE…ISIPQSRTSV (72 aa).

Belongs to the RNA polymerase alpha chain family. In cyanobacteria the RNAP catalytic core is composed of 2 alpha, 1 beta, 1 beta', 1 gamma and 1 omega subunit. When a sigma factor is associated with the core the holoenzyme is formed, which can initiate transcription.

It catalyses the reaction RNA(n) + a ribonucleoside 5'-triphosphate = RNA(n+1) + diphosphate. Functionally, DNA-dependent RNA polymerase catalyzes the transcription of DNA into RNA using the four ribonucleoside triphosphates as substrates. This Prochlorococcus marinus (strain MIT 9215) protein is DNA-directed RNA polymerase subunit alpha.